The primary structure comprises 214 residues: MSTKVPIYLKRGSRKGKKEKLRDLLSSDMISPPLGDFRHTIHIGSGGGDDMFGDISFLQGKFHLLPGTAVEEAEEDGSFDLPFQFTRTTTVCGRELPDGLSPLLKNAISLPVIGGPQALTLPTAQAPPKPPRLHLESPQPSPQPSPQGAGNVDVWRIPEAGSPHNGMSPEPEAEEPFLSHASSLLSLHVDLGPSILDDVLQIMDHDLGRVQIPT.

Residue S2 is modified to N-acetylserine. One can recognise a CRIB domain in the interval 30 to 44 (ISPPLGDFRHTIHIG). Phosphoserine is present on residues S31, S101, S137, S141, and S145. A disordered region spans residues 119 to 177 (LTLPTAQAPPKPPRLHLESPQPSPQPSPQGAGNVDVWRIPEAGSPHNGMSPEPEAEEPF).

This sequence belongs to the BORG/CEP family. Interacts with CDC42 and RHOQ in a GTP-dependent manner, and with SEPT7.

Its subcellular location is the endomembrane system. The protein resides in the cytoplasm. It is found in the cytoskeleton. Probably involved in the organization of the actin cytoskeleton. May act downstream of CDC42 to induce actin filament assembly leading to cell shape changes. Induces pseudopodia formation in fibroblasts in a CDC42-dependent manner. In Mus musculus (Mouse), this protein is Cdc42 effector protein 2 (Cdc42ep2).